A 141-amino-acid chain; its full sequence is Nucleoside diphosphate kinase (141 aa).

6 residues coordinate ATP: lysine 11, phenylalanine 59, arginine 87, threonine 93, arginine 104, and asparagine 114. Histidine 117 acts as the Pros-phosphohistidine intermediate in catalysis.

It belongs to the NDK family. In terms of assembly, homotetramer. It depends on Mg(2+) as a cofactor.

It is found in the cytoplasm. The enzyme catalyses a 2'-deoxyribonucleoside 5'-diphosphate + ATP = a 2'-deoxyribonucleoside 5'-triphosphate + ADP. It carries out the reaction a ribonucleoside 5'-diphosphate + ATP = a ribonucleoside 5'-triphosphate + ADP. In terms of biological role, major role in the synthesis of nucleoside triphosphates other than ATP. The ATP gamma phosphate is transferred to the NDP beta phosphate via a ping-pong mechanism, using a phosphorylated active-site intermediate. This Pseudomonas putida (strain GB-1) protein is Nucleoside diphosphate kinase.